The following is a 213-amino-acid chain: Adenylate kinase (213 aa).

10 to 15 (GAGKGT) lines the ATP pocket. The NMP stretch occupies residues 30 to 59 (AVGDIFRTIIKTSTSEAELINNYVKQGALI). Residues R36, 57–59 (ALI), 85–88 (GYPR), and Q92 each bind AMP. The LID stretch occupies residues 123–161 (GRYSCKNCGKIYNVHFLQPKTDYVCDVCSSNVFDYRRDD). Residue R124 participates in ATP binding. Residues C127 and C130 each coordinate Zn(2+). Residue 133-134 (IY) coordinates ATP. Zn(2+) contacts are provided by C147 and C150. 2 residues coordinate AMP: R158 and R169. K197 lines the ATP pocket.

Belongs to the adenylate kinase family. In terms of assembly, monomer.

It localises to the cytoplasm. The catalysed reaction is AMP + ATP = 2 ADP. It functions in the pathway purine metabolism; AMP biosynthesis via salvage pathway; AMP from ADP: step 1/1. In terms of biological role, catalyzes the reversible transfer of the terminal phosphate group between ATP and AMP. Plays an important role in cellular energy homeostasis and in adenine nucleotide metabolism. The chain is Adenylate kinase from Rickettsia typhi (strain ATCC VR-144 / Wilmington).